A 371-amino-acid chain; its full sequence is MRPDCTDFNTLFLDDVPMMDMRAPIEFTKGAFPGVVNLPLMNDQERQKVGTCFKQQGQSAAIALGHQLVNGALKQQRLEAWAAFAQAHPDGYLYCFRGGLRSQIVQGWLKEAGIQYPKVVGGYKAMRTFLLDTTQQAVEQCDFVLLGGLTGTGKTDVLQQLDNVLDLEGHANHRGSSFGKRATAQPAQIDFENGLAIDMLKKRARGIGQFVLEDEGRIVGSCTVPLGLYQGMQRYPLVWLEDAFDNRVERILRDYVTNLCAEFVAVHGEEDGRRLFAERMRQSMANIYKRLGGERFQRLSELLGQALDEQLRSGDVSLHRGWIEGLLKEYYDPMYAYQREAKAGRIEFAGDGVEVREYLKARARRQHRVDL.

In terms of domain architecture, Rhodanese spans 12–135 (FLDDVPMMDM…MRTFLLDTTQ (124 aa)). Residue Cys-95 is the S-selanylcysteine intermediate of the active site.

Belongs to the SelU family. In terms of assembly, monomer.

It catalyses the reaction 5-methylaminomethyl-2-thiouridine(34) in tRNA + selenophosphate + (2E)-geranyl diphosphate + H2O + H(+) = 5-methylaminomethyl-2-selenouridine(34) in tRNA + (2E)-thiogeraniol + phosphate + diphosphate. The enzyme catalyses 5-methylaminomethyl-2-thiouridine(34) in tRNA + (2E)-geranyl diphosphate = 5-methylaminomethyl-S-(2E)-geranyl-thiouridine(34) in tRNA + diphosphate. It carries out the reaction 5-methylaminomethyl-S-(2E)-geranyl-thiouridine(34) in tRNA + selenophosphate + H(+) = 5-methylaminomethyl-2-(Se-phospho)selenouridine(34) in tRNA + (2E)-thiogeraniol. The catalysed reaction is 5-methylaminomethyl-2-(Se-phospho)selenouridine(34) in tRNA + H2O = 5-methylaminomethyl-2-selenouridine(34) in tRNA + phosphate. In terms of biological role, involved in the post-transcriptional modification of the uridine at the wobble position (U34) of tRNA(Lys), tRNA(Glu) and tRNA(Gln). Catalyzes the conversion of 2-thiouridine (S2U-RNA) to 2-selenouridine (Se2U-RNA). Acts in a two-step process involving geranylation of 2-thiouridine (S2U) to S-geranyl-2-thiouridine (geS2U) and subsequent selenation of the latter derivative to 2-selenouridine (Se2U) in the tRNA chain. This chain is tRNA 2-selenouridine synthase, found in Pseudomonas entomophila (strain L48).